Consider the following 259-residue polypeptide: Ubiquinone/menaquinone biosynthesis C-methyltransferase UbiE (259 aa).

S-adenosyl-L-methionine contacts are provided by residues threonine 82, aspartate 103, 131-132 (NA), and serine 148.

The protein belongs to the class I-like SAM-binding methyltransferase superfamily. MenG/UbiE family.

It catalyses the reaction a 2-demethylmenaquinol + S-adenosyl-L-methionine = a menaquinol + S-adenosyl-L-homocysteine + H(+). It carries out the reaction a 2-methoxy-6-(all-trans-polyprenyl)benzene-1,4-diol + S-adenosyl-L-methionine = a 5-methoxy-2-methyl-3-(all-trans-polyprenyl)benzene-1,4-diol + S-adenosyl-L-homocysteine + H(+). The protein operates within quinol/quinone metabolism; menaquinone biosynthesis; menaquinol from 1,4-dihydroxy-2-naphthoate: step 2/2. It participates in cofactor biosynthesis; ubiquinone biosynthesis. In terms of biological role, methyltransferase required for the conversion of demethylmenaquinol (DMKH2) to menaquinol (MKH2) and the conversion of 2-polyprenyl-6-methoxy-1,4-benzoquinol (DDMQH2) to 2-polyprenyl-3-methyl-6-methoxy-1,4-benzoquinol (DMQH2). This is Ubiquinone/menaquinone biosynthesis C-methyltransferase UbiE from Vibrio campbellii (strain ATCC BAA-1116).